Consider the following 410-residue polypeptide: MENHLGENHRRCTLQKRNVTRELKKGKHTMYALKRVKKIYIRVHEITQIDNQTYQCLEREQNFCENLARMCERTYTEEKPYRCDMCEKTFIQSSDLISHQRIHNYEKPYKCSKCEKSFWHHLALSGHQRTHAGKKFYTCDICGKNFGQSSDLLVHQRSHTGEKPYLCNECDKCFSRSTNLIRHRRTHTGEKPFKCLECEKAFSGKSDLISHQRTHTGERPYKCNKCEKSYRHRSAFIVHKRVHTGEKPYKCGACEKCFGQKSDLIVHQRVHTGEKPYKCLECMRSFTRSANLIRHQATHTHTFKCLEYEKSFNCSSDFIVHQRIHMEEKPHQWSMCESDFLLGMDFVAQQKMRAQTEELHYKYSVCDKTFHHSSALLQHQTVHIDDEYICNMSEKGLDLSSHASETSRVS.

8 C2H2-type zinc fingers span residues tyrosine 81–histidine 103, tyrosine 109–histidine 131, tyrosine 137–histidine 159, tyrosine 165–histidine 187, phenylalanine 193–histidine 215, tyrosine 221–histidine 243, tyrosine 249–histidine 271, and tyrosine 277–histidine 299. The C2H2-type 9; degenerate zinc-finger motif lies at phenylalanine 303–histidine 325. Residues tyrosine 361–histidine 383 form a C2H2-type 10; degenerate zinc finger. A Phosphoserine modification is found at serine 400.

Belongs to the krueppel C2H2-type zinc-finger protein family. As to quaternary structure, interacts with POU5F1.

It is found in the nucleus. It localises to the cytoplasm. Functionally, transcriptional activator. Important for maintenance of pluripotency in embryonic stem cells. Binds directly to the POU5F1 distal enhancer and the NANOG proximal promoter, and enhances expression of both genes. Can also bind to numerous other gene promoters and regulates expression of many other pluripotency factors, either directly or indirectly. Promotes inhibition of MAPK signaling during embryonic stem cell differentiation. This is Zinc finger protein 322 (Znf322) from Mus musculus (Mouse).